A 207-amino-acid chain; its full sequence is ATP-dependent Clp protease proteolytic subunit 2 (207 aa).

S102 (nucleophile) is an active-site residue. Residue H127 is part of the active site.

It belongs to the peptidase S14 family. As to quaternary structure, fourteen ClpP subunits assemble into 2 heptameric rings which stack back to back to give a disk-like structure with a central cavity, resembling the structure of eukaryotic proteasomes.

It is found in the cytoplasm. The catalysed reaction is Hydrolysis of proteins to small peptides in the presence of ATP and magnesium. alpha-casein is the usual test substrate. In the absence of ATP, only oligopeptides shorter than five residues are hydrolyzed (such as succinyl-Leu-Tyr-|-NHMec, and Leu-Tyr-Leu-|-Tyr-Trp, in which cleavage of the -Tyr-|-Leu- and -Tyr-|-Trp bonds also occurs).. Functionally, cleaves peptides in various proteins in a process that requires ATP hydrolysis. Has a chymotrypsin-like activity. Plays a major role in the degradation of misfolded proteins. The polypeptide is ATP-dependent Clp protease proteolytic subunit 2 (Bifidobacterium longum (strain NCC 2705)).